A 569-amino-acid polypeptide reads, in one-letter code: Glutamyl-tRNA reductase (569 aa).

Residues 49–52 (TCNR), serine 109, 114–116 (EGQ), and glutamine 120 each bind substrate. Cysteine 50 acts as the Nucleophile in catalysis. 192 to 197 (GAGSMS) serves as a coordination point for NADP(+). The insert stretch occupies residues 284–397 (PVAVREETPA…VEAPRPAPAL (114 aa)). A disordered region spans residues 546 to 569 (AAVSRADDRDTSDSTENAKNRGRE). A compositionally biased stretch (basic and acidic residues) spans 550–569 (RADDRDTSDSTENAKNRGRE).

This sequence belongs to the glutamyl-tRNA reductase family. In terms of assembly, homodimer.

The enzyme catalyses (S)-4-amino-5-oxopentanoate + tRNA(Glu) + NADP(+) = L-glutamyl-tRNA(Glu) + NADPH + H(+). Its pathway is porphyrin-containing compound metabolism; protoporphyrin-IX biosynthesis; 5-aminolevulinate from L-glutamyl-tRNA(Glu): step 1/2. In terms of biological role, catalyzes the NADPH-dependent reduction of glutamyl-tRNA(Glu) to glutamate 1-semialdehyde (GSA). This chain is Glutamyl-tRNA reductase, found in Streptomyces avermitilis (strain ATCC 31267 / DSM 46492 / JCM 5070 / NBRC 14893 / NCIMB 12804 / NRRL 8165 / MA-4680).